The chain runs to 159 residues: Glucosamine 6-phosphate N-acetyltransferase (159 aa).

An N-acetylserine modification is found at serine 2. Residues threonine 28, 86-89, and 98-100 contribute to the D-glucosamine 6-phosphate site; these read KIIH and EDI. The 132-residue stretch at 28–159 folds into the N-acetyltransferase domain; it reads TTVGTITPES…NAGVEMQIRK (132 aa). Acetyl-CoA contacts are provided by residues 100 to 102 and 108 to 113; these read IAV and GQGLGK. D-glucosamine 6-phosphate-binding positions include 129–130 and aspartate 134; that span reads YK. 143-145 lines the acetyl-CoA pocket; that stretch reads YEK. Arginine 158 contributes to the D-glucosamine 6-phosphate binding site.

The protein belongs to the acetyltransferase family. GNA1 subfamily. Homodimer.

It carries out the reaction D-glucosamine 6-phosphate + acetyl-CoA = N-acetyl-D-glucosamine 6-phosphate + CoA + H(+). The protein operates within nucleotide-sugar biosynthesis; UDP-N-acetyl-alpha-D-glucosamine biosynthesis; N-acetyl-alpha-D-glucosamine 1-phosphate from alpha-D-glucosamine 6-phosphate (route I): step 1/2. In Saccharomyces cerevisiae (strain ATCC 204508 / S288c) (Baker's yeast), this protein is Glucosamine 6-phosphate N-acetyltransferase (GNA1).